The sequence spans 332 residues: 5-dehydro-2-deoxygluconokinase 2 (332 aa).

Belongs to the carbohydrate kinase PfkB family.

The enzyme catalyses 5-dehydro-2-deoxy-D-gluconate + ATP = 6-phospho-5-dehydro-2-deoxy-D-gluconate + ADP + H(+). It participates in polyol metabolism; myo-inositol degradation into acetyl-CoA; acetyl-CoA from myo-inositol: step 5/7. Catalyzes the phosphorylation of 5-dehydro-2-deoxy-D-gluconate (2-deoxy-5-keto-D-gluconate or DKG) to 6-phospho-5-dehydro-2-deoxy-D-gluconate (DKGP). The polypeptide is 5-dehydro-2-deoxygluconokinase 2 (Bacillus cereus (strain ZK / E33L)).